The following is a 203-amino-acid chain: Dephospho-CoA kinase (203 aa).

The region spanning 3-201 is the DPCK domain; it reads SVGLTGGIGS…QRYLGYAAAA (199 aa). Residue 11-16 participates in ATP binding; that stretch reads GSGKTT.

It belongs to the CoaE family.

It is found in the cytoplasm. The enzyme catalyses 3'-dephospho-CoA + ATP = ADP + CoA + H(+). It functions in the pathway cofactor biosynthesis; coenzyme A biosynthesis; CoA from (R)-pantothenate: step 5/5. Its function is as follows. Catalyzes the phosphorylation of the 3'-hydroxyl group of dephosphocoenzyme A to form coenzyme A. The protein is Dephospho-CoA kinase of Burkholderia thailandensis (strain ATCC 700388 / DSM 13276 / CCUG 48851 / CIP 106301 / E264).